A 497-amino-acid polypeptide reads, in one-letter code: Lysine--tRNA ligase (497 aa).

2 residues coordinate Mg(2+): E409 and E416.

Belongs to the class-II aminoacyl-tRNA synthetase family. As to quaternary structure, homodimer. The cofactor is Mg(2+).

The protein localises to the cytoplasm. It catalyses the reaction tRNA(Lys) + L-lysine + ATP = L-lysyl-tRNA(Lys) + AMP + diphosphate. The polypeptide is Lysine--tRNA ligase (Streptococcus pyogenes serotype M49 (strain NZ131)).